The sequence spans 867 residues: MKFSHSLQFNAVPEWSESYIAYSNLKKLIYSLEHEQITLQQGAPDEETRLLEHERRSPDDRFMFALDKELQGIVEFYAPKEKEIADQYGRIKGEFETYENEYMSQGNNINYPTPERLQKSSASRKSGRMARSQELPRITSSNREIYLNGQTSDGGYAAPAISRAESTAIQPSEPHDVDTSKNGLSKKQHSEAQPEVQGNDDEVEEEDDDDDDEDEDEDEDEDNNNNNRWLLIEQYPSDIVAYENFVSLKRKLTQLYVSIHDLISYVHLNYTGFSKILKKYDKTLGSSLRESYMKRVNQAYPFLPATGKTLSKRLNIVAEWYAKLCCQGDTFVAIRRLRGHLREYVAWERNTIWREMMAMERRTQAARLSGLKPVAADEKESEQPPYFTIKTKFGVFRIPRCFFNSTIATLITIIVIFILLLSFPVIDNREQNNCLALLVMVSLLWATEAIPLFVTSFLVPFMTVFLKILRDENGSPLSGKESTKVIFSSMWNPTIVLLLGGFTIAAALSKYHIAKRLATSILAHAGRKPRSVLLTNMFVAMFASMWISNVAAPVLCFSIIQPLLRNLPAESDFAKILIVGIALASNVGGIASPISSPQNIVALQNMDPAAGWGEWFAVSIPVSLLCIFSIWFLLSFGLLKDEHITLAKIRSTKDTFTGVQWFISIVTIGTIVLWCLERRFDEVFGDMGVIALVPIIVFFGTGLLTKEDFNNFLWTVIVLAMGGVALGKVVSSSGLLELIALKIGNAVSSLNTFRVLLIFSALTLVVSSFISHIVAAMVVLPIVHEVGSRLADPHPRLFVLASGMMCSLAMALPTSGFPNMTAIMMENEAGKRYLKVSDFLKAGIPATLISFVILLLIGTPIMRALGF.

The 294-residue stretch at 1–294 (MKFSHSLQFN…GSSLRESYMK (294 aa)) folds into the SPX domain. Disordered regions lie at residues 105 to 152 (QGNN…GQTS) and 165 to 228 (ESTA…NNNR). The span at 138–152 (ITSSNREIYLNGQTS) shows a compositional bias: polar residues. Over residues 198 to 223 (GNDDEVEEEDDDDDDEDEDEDEDEDN) the composition is skewed to acidic residues. The next 12 membrane-spanning stretches (helical) occupy residues 406–426 (TIAT…FPVI), 434–454 (CLAL…PLFV), 485–505 (VIFS…FTIA), 537–557 (MFVA…VLCF), 576–596 (ILIV…PISS), 616–636 (FAVS…LLSF), 656–676 (FTGV…LWCL), 683–703 (VFGD…GTGL), 712–732 (FLWT…VVSS), 755–775 (VLLI…HIVA), 797–817 (LFVL…TSGF), and 842–862 (AGIP…TPIM).

Belongs to the CitM (TC 2.A.11) transporter family.

The protein resides in the endoplasmic reticulum membrane. This is an uncharacterized protein from Schizosaccharomyces pombe (strain 972 / ATCC 24843) (Fission yeast).